The chain runs to 533 residues: NADH-quinone oxidoreductase subunit N (533 aa).

The next 14 membrane-spanning stretches (helical) occupy residues 13–33 (VWPLLVVFGVAAVGVLVEGFV), 40–60 (LVQAALAIAGVVVALVGTILV), 87–107 (PALFIWGMLLVFALGGALLFA), 141–161 (HTEVYPLMMFALGGMMLFAAA), 164–184 (LLTLFVALEVLSLPLYLLSGL), 200–220 (FMLGAFSSGFFLYGAALVYGF), 243–263 (LLIGIGMLSVGLLFKVGAVPF), 275–295 (PTAVTAFMAAGTKIAAFGAML), 310–330 (QPMLWIIAILTMLVGALIAIV), 337–357 (MLAYSSVAHTGFLLTGVLGVQ), 373–393 (VLFYLVTYGFAVVGAFAVVTL), 417–437 (VAGVFAFFLLSMAGIPLTAGF), 451–471 (GAWPVVIAAVLCSIIAVFFYV), and 502–522 (ATIFVGVAATLVLGVVPGPVL).

This sequence belongs to the complex I subunit 2 family. As to quaternary structure, NDH-1 is composed of 14 different subunits. Subunits NuoA, H, J, K, L, M, N constitute the membrane sector of the complex.

The protein localises to the cell membrane. It carries out the reaction a quinone + NADH + 5 H(+)(in) = a quinol + NAD(+) + 4 H(+)(out). Functionally, NDH-1 shuttles electrons from NADH, via FMN and iron-sulfur (Fe-S) centers, to quinones in the respiratory chain. The immediate electron acceptor for the enzyme in this species is believed to be a menaquinone. Couples the redox reaction to proton translocation (for every two electrons transferred, four hydrogen ions are translocated across the cytoplasmic membrane), and thus conserves the redox energy in a proton gradient. In Nocardioides sp. (strain ATCC BAA-499 / JS614), this protein is NADH-quinone oxidoreductase subunit N.